The chain runs to 284 residues: Tropomyosin Per a 7.0102 (284 aa).

Positions M1–K266 form a coiled coil.

It belongs to the tropomyosin family. Homodimer. As to expression, expressed in striated skeletal muscle (at protein level).

Its function is as follows. Tropomyosin, in association with the troponin complex, plays a central role in the calcium dependent regulation of muscle contraction. This chain is Tropomyosin Per a 7.0102, found in Periplaneta americana (American cockroach).